A 247-amino-acid polypeptide reads, in one-letter code: 2,3-bisphosphoglycerate-dependent phosphoglycerate mutase (247 aa).

Substrate contacts are provided by residues 8–15 (RHGESVWN), 21–22 (TG), R60, 87–90 (ERHY), K98, 114–115 (RR), and 183–184 (GN). The Tele-phosphohistidine intermediate role is filled by H9. The Proton donor/acceptor role is filled by E87.

The protein belongs to the phosphoglycerate mutase family. BPG-dependent PGAM subfamily.

The enzyme catalyses (2R)-2-phosphoglycerate = (2R)-3-phosphoglycerate. The protein operates within carbohydrate degradation; glycolysis; pyruvate from D-glyceraldehyde 3-phosphate: step 3/5. Catalyzes the interconversion of 2-phosphoglycerate and 3-phosphoglycerate. The chain is 2,3-bisphosphoglycerate-dependent phosphoglycerate mutase from Thermobifida fusca (strain YX).